The following is a 248-amino-acid chain: Ribosomal RNA small subunit methyltransferase J (248 aa).

S-adenosyl-L-methionine contacts are provided by residues arginine 98–aspartate 99, glutamate 114–arginine 115, serine 150–serine 151, and aspartate 168.

The protein belongs to the methyltransferase superfamily. RsmJ family.

Its subcellular location is the cytoplasm. The catalysed reaction is guanosine(1516) in 16S rRNA + S-adenosyl-L-methionine = N(2)-methylguanosine(1516) in 16S rRNA + S-adenosyl-L-homocysteine + H(+). Its function is as follows. Specifically methylates the guanosine in position 1516 of 16S rRNA. The chain is Ribosomal RNA small subunit methyltransferase J from Shewanella baltica (strain OS185).